The chain runs to 108 residues: Nucleoid-associated protein BAV0915 (108 aa).

Belongs to the YbaB/EbfC family. Homodimer.

It is found in the cytoplasm. The protein localises to the nucleoid. Functionally, binds to DNA and alters its conformation. May be involved in regulation of gene expression, nucleoid organization and DNA protection. The chain is Nucleoid-associated protein BAV0915 from Bordetella avium (strain 197N).